The primary structure comprises 336 residues: Glycerol-3-phosphate dehydrogenase [NAD(P)+] (336 aa).

Residues S11, W12, and K106 each contribute to the NADPH site. Residues K106, G134, and S136 each contribute to the sn-glycerol 3-phosphate site. A138 serves as a coordination point for NADPH. Residues K189, D242, S252, R253, and N254 each contribute to the sn-glycerol 3-phosphate site. The active-site Proton acceptor is K189. R253 contacts NADPH. NADPH is bound by residues V277 and E279.

The protein belongs to the NAD-dependent glycerol-3-phosphate dehydrogenase family.

The protein localises to the cytoplasm. It carries out the reaction sn-glycerol 3-phosphate + NAD(+) = dihydroxyacetone phosphate + NADH + H(+). It catalyses the reaction sn-glycerol 3-phosphate + NADP(+) = dihydroxyacetone phosphate + NADPH + H(+). Its pathway is membrane lipid metabolism; glycerophospholipid metabolism. Functionally, catalyzes the reduction of the glycolytic intermediate dihydroxyacetone phosphate (DHAP) to sn-glycerol 3-phosphate (G3P), the key precursor for phospholipid synthesis. The protein is Glycerol-3-phosphate dehydrogenase [NAD(P)+] of Agathobacter rectalis (strain ATCC 33656 / DSM 3377 / JCM 17463 / KCTC 5835 / VPI 0990) (Eubacterium rectale).